A 306-amino-acid chain; its full sequence is Acetylglutamate kinase (306 aa).

Substrate-binding positions include 75 to 76, Arg-97, and Asn-197; that span reads GG.

Belongs to the acetylglutamate kinase family. ArgB subfamily.

The protein localises to the cytoplasm. The catalysed reaction is N-acetyl-L-glutamate + ATP = N-acetyl-L-glutamyl 5-phosphate + ADP. It functions in the pathway amino-acid biosynthesis; L-arginine biosynthesis; N(2)-acetyl-L-ornithine from L-glutamate: step 2/4. Catalyzes the ATP-dependent phosphorylation of N-acetyl-L-glutamate. In Streptomyces coelicolor (strain ATCC BAA-471 / A3(2) / M145), this protein is Acetylglutamate kinase.